Here is a 395-residue protein sequence, read N- to C-terminus: L-rhamnonate dehydratase (395 aa).

H23 and R49 together coordinate substrate. Mg(2+)-binding residues include D215, E241, and E269. H319 serves as the catalytic Proton acceptor. E339 is a substrate binding site.

This sequence belongs to the mandelate racemase/muconate lactonizing enzyme family. RhamD subfamily. In terms of assembly, homooctamer; tetramer of dimers. The cofactor is Mg(2+).

The catalysed reaction is L-rhamnonate = 2-dehydro-3-deoxy-L-rhamnonate + H2O. Functionally, catalyzes the dehydration of L-rhamnonate to 2-keto-3-deoxy-L-rhamnonate (KDR). This is L-rhamnonate dehydratase from Delftia acidovorans (strain DSM 14801 / SPH-1).